The following is a 130-amino-acid chain: Small ribosomal subunit protein uS8 (130 aa).

Belongs to the universal ribosomal protein uS8 family. In terms of assembly, part of the 30S ribosomal subunit. Contacts proteins S5 and S12.

One of the primary rRNA binding proteins, it binds directly to 16S rRNA central domain where it helps coordinate assembly of the platform of the 30S subunit. This Haemophilus ducreyi (strain 35000HP / ATCC 700724) protein is Small ribosomal subunit protein uS8.